The following is a 236-amino-acid chain: 2-C-methyl-D-erythritol 4-phosphate cytidylyltransferase (236 aa).

It belongs to the IspD/TarI cytidylyltransferase family. IspD subfamily.

It carries out the reaction 2-C-methyl-D-erythritol 4-phosphate + CTP + H(+) = 4-CDP-2-C-methyl-D-erythritol + diphosphate. It participates in isoprenoid biosynthesis; isopentenyl diphosphate biosynthesis via DXP pathway; isopentenyl diphosphate from 1-deoxy-D-xylulose 5-phosphate: step 2/6. Catalyzes the formation of 4-diphosphocytidyl-2-C-methyl-D-erythritol from CTP and 2-C-methyl-D-erythritol 4-phosphate (MEP). The polypeptide is 2-C-methyl-D-erythritol 4-phosphate cytidylyltransferase (Pseudomonas syringae pv. tomato (strain ATCC BAA-871 / DC3000)).